A 32-amino-acid polypeptide reads, in one-letter code: Cytochrome b6-f complex subunit 7 (32 aa).

A helical membrane pass occupies residues 9–27 (AVVFWVLIPVGLAGGALLL).

The protein belongs to the PetM family. As to quaternary structure, the 4 large subunits of the cytochrome b6-f complex are cytochrome b6, subunit IV (17 kDa polypeptide, PetD), cytochrome f and the Rieske protein, while the 4 small subunits are PetG, PetL, PetM and PetN. The complex functions as a dimer.

Its subcellular location is the cellular thylakoid membrane. Component of the cytochrome b6-f complex, which mediates electron transfer between photosystem II (PSII) and photosystem I (PSI), cyclic electron flow around PSI, and state transitions. The sequence is that of Cytochrome b6-f complex subunit 7 from Synechococcus sp. (strain CC9311).